The chain runs to 290 residues: Arylamine N-acetyltransferase 1 (290 aa).

M1 is subject to N-acetylmethionine. The active-site Acyl-thioester intermediate is C68. S103 provides a ligand contact to CoA. Residue 106–107 coordinates substrate; it reads VH. Active-site residues include H107 and D122. CoA is bound at residue Y208.

The protein belongs to the arylamine N-acetyltransferase family.

The protein resides in the cytoplasm. The catalysed reaction is an arylamine + acetyl-CoA = an N-acetylarylamine + CoA. Functionally, participates in the detoxification of a plethora of hydrazine and arylamine drugs. Isoniazid, 2-aminofluorene and anisidine are preferred substrates for NAT-1. No activity with p-aminobenzoic acid (PABA) nor SMZ. The sequence is that of Arylamine N-acetyltransferase 1 (Nat1) from Mus musculus (Mouse).